Here is an 84-residue protein sequence, read N- to C-terminus: Cell division topological specificity factor (84 aa).

Belongs to the MinE family.

Its function is as follows. Prevents the cell division inhibition by proteins MinC and MinD at internal division sites while permitting inhibition at polar sites. This ensures cell division at the proper site by restricting the formation of a division septum at the midpoint of the long axis of the cell. The chain is Cell division topological specificity factor from Cupriavidus taiwanensis (strain DSM 17343 / BCRC 17206 / CCUG 44338 / CIP 107171 / LMG 19424 / R1) (Ralstonia taiwanensis (strain LMG 19424)).